Reading from the N-terminus, the 198-residue chain is Holliday junction branch migration complex subunit RuvA (198 aa).

The tract at residues methionine 1–histidine 63 is domain I. Positions threonine 64–lysine 142 are domain II. A flexible linker region spans residues alanine 143–lysine 147. The domain III stretch occupies residues alanine 148 to glycine 198.

This sequence belongs to the RuvA family. In terms of assembly, homotetramer. Forms an RuvA(8)-RuvB(12)-Holliday junction (HJ) complex. HJ DNA is sandwiched between 2 RuvA tetramers; dsDNA enters through RuvA and exits via RuvB. An RuvB hexamer assembles on each DNA strand where it exits the tetramer. Each RuvB hexamer is contacted by two RuvA subunits (via domain III) on 2 adjacent RuvB subunits; this complex drives branch migration. In the full resolvosome a probable DNA-RuvA(4)-RuvB(12)-RuvC(2) complex forms which resolves the HJ.

The protein localises to the cytoplasm. In terms of biological role, the RuvA-RuvB-RuvC complex processes Holliday junction (HJ) DNA during genetic recombination and DNA repair, while the RuvA-RuvB complex plays an important role in the rescue of blocked DNA replication forks via replication fork reversal (RFR). RuvA specifically binds to HJ cruciform DNA, conferring on it an open structure. The RuvB hexamer acts as an ATP-dependent pump, pulling dsDNA into and through the RuvAB complex. HJ branch migration allows RuvC to scan DNA until it finds its consensus sequence, where it cleaves and resolves the cruciform DNA. The chain is Holliday junction branch migration complex subunit RuvA from Streptococcus pyogenes serotype M49 (strain NZ131).